A 287-amino-acid chain; its full sequence is PsbP domain-containing protein 1, chloroplastic (287 aa).

Belongs to the PsbP family. Partially associated with photosystem I (PSI) complex, but is not a subunit of the complex. Interacts with PsaA and PsaB, but not with PasF.

The protein localises to the plastid. It is found in the chloroplast thylakoid lumen. Its function is as follows. Photosystem I assembly factor that assists the proper folding and integration of PsaB and PsaA into the thylakoid membrane. The chain is PsbP domain-containing protein 1, chloroplastic (PPD1) from Arabidopsis thaliana (Mouse-ear cress).